Consider the following 155-residue polypeptide: Interleukin-2 (155 aa).

A signal peptide spans 1-20 (MYRMQLLSCIALTLALVANG). O-linked (GalNAc...) threonine glycosylation occurs at threonine 23. Residues cysteine 79 and cysteine 127 are joined by a disulfide bond.

The protein belongs to the IL-2 family.

It is found in the secreted. Its function is as follows. Cytokine produced by activated CD4-positive helper T-cells and to a lesser extend activated CD8-positive T-cells and natural killer (NK) cells that plays pivotal roles in the immune response and tolerance. Binds to a receptor complex composed of either the high-affinity trimeric IL-2R (IL2RA/CD25, IL2RB/CD122 and IL2RG/CD132) or the low-affinity dimeric IL-2R (IL2RB and IL2RG). Interaction with the receptor leads to oligomerization and conformation changes in the IL-2R subunits resulting in downstream signaling starting with phosphorylation of JAK1 and JAK3. In turn, JAK1 and JAK3 phosphorylate the receptor to form a docking site leading to the phosphorylation of several substrates including STAT5. This process leads to activation of several pathways including STAT, phosphoinositide-3-kinase/PI3K and mitogen-activated protein kinase/MAPK pathways. Functions as a T-cell growth factor and can increase NK-cell cytolytic activity as well. Promotes strong proliferation of activated B-cells and subsequently immunoglobulin production. Plays a pivotal role in regulating the adaptive immune system by controlling the survival and proliferation of regulatory T-cells, which are required for the maintenance of immune tolerance. Moreover, participates in the differentiation and homeostasis of effector T-cell subsets, including Th1, Th2, Th17 as well as memory CD8-positive T-cells. The sequence is that of Interleukin-2 (IL2) from Capra hircus (Goat).